A 113-amino-acid chain; its full sequence is ILLDEHIRLLGIDPYSIDGYSRECFSHLAVASTVARGGADLAIGSEKMGLQVKNIDFIPLQKERYELVIKKEDMNKPFFKVLMDIINSNNFKMELEGLGGYDLSETGKIVTEL.

The protein to M.jannaschii MJ0886 C-terminal region.

This is an uncharacterized protein from Clostridium pasteurianum.